We begin with the raw amino-acid sequence, 125 residues long: MSRRTDKVNELLRREIGTTIQRDFEFPGTIVTVIEVEVTDDLKEGKVWVGVVGKMAPSQVLEKLNSRHGLIQSAVARRVVLRNTPRLTFRLDDSAQRGVDLVNLLEDIDKNLPKAPPADAENDGE.

It belongs to the RbfA family. Monomer. Binds 30S ribosomal subunits, but not 50S ribosomal subunits or 70S ribosomes.

It localises to the cytoplasm. In terms of biological role, one of several proteins that assist in the late maturation steps of the functional core of the 30S ribosomal subunit. Associates with free 30S ribosomal subunits (but not with 30S subunits that are part of 70S ribosomes or polysomes). Required for efficient processing of 16S rRNA. May interact with the 5'-terminal helix region of 16S rRNA. This chain is Ribosome-binding factor A, found in Akkermansia muciniphila (strain ATCC BAA-835 / DSM 22959 / JCM 33894 / BCRC 81048 / CCUG 64013 / CIP 107961 / Muc).